Consider the following 298-residue polypeptide: GTPase Era (298 aa).

The Era-type G domain maps to 3-170 (KSGFVAILGR…VQLLKDNLEE (168 aa)). A G1 region spans residues 11-18 (GRPNVGKS). 11-18 (GRPNVGKS) is a GTP binding site. Positions 37-41 (QTTRN) are G2. A G3 region spans residues 58 to 61 (DTPG). Residues 58 to 62 (DTPGI) and 120 to 123 (NKID) each bind GTP. The interval 120-123 (NKID) is G4. Residues 149–151 (ISA) form a G5 region. One can recognise a KH type-2 domain in the interval 201–279 (TQQEVPHSVA…YLETWVKVKK (79 aa)).

The protein belongs to the TRAFAC class TrmE-Era-EngA-EngB-Septin-like GTPase superfamily. Era GTPase family. Monomer.

The protein resides in the cytoplasm. The protein localises to the cell membrane. An essential GTPase that binds both GDP and GTP, with rapid nucleotide exchange. Plays a role in 16S rRNA processing and 30S ribosomal subunit biogenesis and possibly also in cell cycle regulation and energy metabolism. This is GTPase Era from Streptococcus equi subsp. equi (strain 4047).